Consider the following 63-residue polypeptide: Anionic peptide NDBP7 (63 aa).

Residues 1-20 (MISRFCLLFLLVFVVSKIQA) form the signal peptide.

This sequence belongs to the non-disulfide-bridged peptide (NDBP) superfamily. Long chain multifunctional peptide (group 2) family. Expressed by the venom gland.

It localises to the secreted. The protein is Anionic peptide NDBP7 of Lychas mucronatus (Chinese swimming scorpion).